The sequence spans 298 residues: MNIRIGTRGSILAIAQTLEIKNLLNRYFPEISVQIVKIKTSGDINNQVPLSAIGGKSLFIKEIEEALLMGKVDLAVHSVKDIPAFYCEGLIIPCVLKRNSPYDVFISSKHKDIKSLPLNATIGTSSVRRKVQLNYLRPDLQVVPVRGNIDTRILKANVGEFDGIVLAEAGLIRINRCDVIKEILSPKIMLSAVGQGAIGIQCRVDDHSIINKIKVLNCHQSYVCVMAERSFLKTINGSCDTPLAALAQYVNNDTIHMSCMLANEKNMVFASCCFNECDAEKSGINMGKKLMDELSQYY.

Cys239 is subject to S-(dipyrrolylmethanemethyl)cysteine.

It belongs to the HMBS family. In terms of assembly, monomer. It depends on dipyrromethane as a cofactor.

The enzyme catalyses 4 porphobilinogen + H2O = hydroxymethylbilane + 4 NH4(+). It functions in the pathway porphyrin-containing compound metabolism; protoporphyrin-IX biosynthesis; coproporphyrinogen-III from 5-aminolevulinate: step 2/4. Functionally, tetrapolymerization of the monopyrrole PBG into the hydroxymethylbilane pre-uroporphyrinogen in several discrete steps. The polypeptide is Porphobilinogen deaminase (Ehrlichia chaffeensis (strain ATCC CRL-10679 / Arkansas)).